Reading from the N-terminus, the 532-residue chain is Light-independent protochlorophyllide reductase subunit B (532 aa).

D36 contacts [4Fe-4S] cluster. Residue D282 is the Proton donor of the active site. Substrate is bound at residue 417 to 418 (GL).

This sequence belongs to the ChlB/BchB/BchZ family. Protochlorophyllide reductase is composed of three subunits; BchL, BchN and BchB. Forms a heterotetramer of two BchB and two BchN subunits. It depends on [4Fe-4S] cluster as a cofactor.

The catalysed reaction is chlorophyllide a + oxidized 2[4Fe-4S]-[ferredoxin] + 2 ADP + 2 phosphate = protochlorophyllide a + reduced 2[4Fe-4S]-[ferredoxin] + 2 ATP + 2 H2O. It participates in porphyrin-containing compound metabolism; bacteriochlorophyll biosynthesis (light-independent). Functionally, component of the dark-operative protochlorophyllide reductase (DPOR) that uses Mg-ATP and reduced ferredoxin to reduce ring D of protochlorophyllide (Pchlide) to form chlorophyllide a (Chlide). This reaction is light-independent. The NB-protein (BchN-BchB) is the catalytic component of the complex. This is Light-independent protochlorophyllide reductase subunit B from Methylobacterium radiotolerans (strain ATCC 27329 / DSM 1819 / JCM 2831 / NBRC 15690 / NCIMB 10815 / 0-1).